The sequence spans 493 residues: Cytochrome P450 710A4 (493 aa).

Residues 5–25 (VSLFASLTPYLVSALLLFLLL) traverse the membrane as a helical segment. Residue C435 coordinates heme.

This sequence belongs to the cytochrome P450 family. Requires heme as cofactor. In terms of tissue distribution, very weak expression in roots and root hairs. Not detected in the root tips.

It is found in the membrane. It carries out the reaction 5-dehydroepisterol + NADPH + O2 + H(+) = ergosta-5,7,22,24(28)-tetraen-3beta-ol + NADP(+) + 2 H2O. It participates in steroid biosynthesis; sterol biosynthesis. Its function is as follows. Required to form the C-22 double bond in the sterol side chain. Possesses C-22 desaturase activity toward beta-sitosterol and produces stigmasterol. The protein is Cytochrome P450 710A4 of Arabidopsis thaliana (Mouse-ear cress).